The primary structure comprises 244 residues: Phosphoribosyl isomerase A (244 aa).

The active-site Proton acceptor is the D10. Catalysis depends on D129, which acts as the Proton donor.

Belongs to the HisA/HisF family.

It is found in the cytoplasm. It carries out the reaction 1-(5-phospho-beta-D-ribosyl)-5-[(5-phospho-beta-D-ribosylamino)methylideneamino]imidazole-4-carboxamide = 5-[(5-phospho-1-deoxy-D-ribulos-1-ylimino)methylamino]-1-(5-phospho-beta-D-ribosyl)imidazole-4-carboxamide. The catalysed reaction is N-(5-phospho-beta-D-ribosyl)anthranilate = 1-(2-carboxyphenylamino)-1-deoxy-D-ribulose 5-phosphate. The protein operates within amino-acid biosynthesis; L-histidine biosynthesis; L-histidine from 5-phospho-alpha-D-ribose 1-diphosphate: step 4/9. It participates in amino-acid biosynthesis; L-tryptophan biosynthesis; L-tryptophan from chorismate: step 3/5. Involved in both the histidine and tryptophan biosynthetic pathways. This chain is Phosphoribosyl isomerase A, found in Mycobacterium ulcerans (strain Agy99).